A 369-amino-acid chain; its full sequence is Methylthioribose-1-phosphate isomerase (369 aa).

Residues 54 to 56, R95, and Q208 each bind substrate; that span reads RGA. The Proton donor role is filled by D249. 259–260 lines the substrate pocket; the sequence is NK.

It belongs to the eIF-2B alpha/beta/delta subunits family. MtnA subfamily.

The enzyme catalyses 5-(methylsulfanyl)-alpha-D-ribose 1-phosphate = 5-(methylsulfanyl)-D-ribulose 1-phosphate. Its pathway is amino-acid biosynthesis; L-methionine biosynthesis via salvage pathway; L-methionine from S-methyl-5-thio-alpha-D-ribose 1-phosphate: step 1/6. Functionally, catalyzes the interconversion of methylthioribose-1-phosphate (MTR-1-P) into methylthioribulose-1-phosphate (MTRu-1-P). The chain is Methylthioribose-1-phosphate isomerase from Desulfosudis oleivorans (strain DSM 6200 / JCM 39069 / Hxd3) (Desulfococcus oleovorans).